A 93-amino-acid polypeptide reads, in one-letter code: Acyl carrier protein AcpXL (93 aa).

The Carrier domain maps to 2 to 88 (STTFDKVAKI…NLCAKIDALV (87 aa)). Ser-37 is modified (O-(pantetheine 4'-phosphoryl)serine).

4'-phosphopantetheine is transferred from CoA to a specific serine of apo-ACP by AcpS. This modification is essential for activity because fatty acids are bound in thioester linkage to the sulfhydryl of the prosthetic group.

Its subcellular location is the cytoplasm. The protein operates within glycolipid biosynthesis; KDO(2)-lipid A biosynthesis. Carrier of the growing fatty acid chain in fatty acid biosynthesis. Is involved in the transfer of long hydroxylated fatty acids to lipid A. The sequence is that of Acyl carrier protein AcpXL (acpXL) from Mesorhizobium japonicum (strain LMG 29417 / CECT 9101 / MAFF 303099) (Mesorhizobium loti (strain MAFF 303099)).